A 439-amino-acid chain; its full sequence is Prenyltransferase iacE (439 aa).

Substrate contacts are provided by residues 88-89 (WI), Glu97, Arg112, Lys198, Tyr200, Arg271, Lys273, and Tyr275.

This sequence belongs to the tryptophan dimethylallyltransferase family.

The catalysed reaction is siccayne + dimethylallyl diphosphate = pestalodiol + diphosphate. The protein operates within secondary metabolite biosynthesis. Its function is as follows. Prenyltransferase; part of the gene cluster that mediates the biosynthesis of iso-A82775C, a enylepoxycyclohexane and biosynthetic precursor of the chloropestolide anticancer natural products. Within the cluster, the prenyltransferase iacE prenylates siccayne to generate pestalodiol E, using dimethylallyl diphosphate (DMAPP) as cosubstrate. The probable oxidoreductase iacF is then involved in the epoxidation of pestalodiol F to pestalodiol F, which is further converted to pestalofone A by the short-chain dehydrogenase/reductase iacG. Iso-A82775C is subsequently generated from pestalofone A by the short-chain dehydrogenase/reductase iacC. Iso-A82775C is further condensed with maldoxin via a Diels-Alder reaction to produce the anticancer natural products chloropestolides A to E. The protein is Prenyltransferase iacE of Pestalotiopsis fici (strain W106-1 / CGMCC3.15140).